A 132-amino-acid polypeptide reads, in one-letter code: Cytochrome b5 (132 aa).

A Cytochrome b5 heme-binding domain is found at 2–78; sequence GKIFTLAEVA…LDEYYVGDID (77 aa). Heme is bound by residues H37 and H61. A helical transmembrane segment spans residues 104–124; that stretch reads FVIKLLQFLVPLVILAGAIGI.

Belongs to the cytochrome b5 family.

Its subcellular location is the endoplasmic reticulum membrane. It is found in the microsome membrane. Membrane bound hemoprotein which function as an electron carrier for several membrane bound oxygenases. The polypeptide is Cytochrome b5 (Borago officinalis (Bourrache)).